The sequence spans 272 residues: F-box protein PP2-B10 (272 aa).

The F-box domain maps to Ser11–Phe57.

Part of a SCF (ASK-cullin-F-box) protein ligase complex. Interacts with SKP1B/ASK2, ASK11 and ASK12.

Its pathway is protein modification; protein ubiquitination. Its function is as follows. Component of SCF(ASK-cullin-F-box) E3 ubiquitin ligase complexes, which may mediate the ubiquitination and subsequent proteasomal degradation of target proteins. The protein is F-box protein PP2-B10 (PP2B10) of Arabidopsis thaliana (Mouse-ear cress).